The chain runs to 142 residues: Hemoglobin subunit alpha (142 aa).

Residues 2 to 142 enclose the Globin domain; the sequence is VLSDADKTHV…VATVLTSKYR (141 aa). Serine 4 bears the Phosphoserine mark. The residue at position 8 (lysine 8) is an N6-succinyllysine. Threonine 9 bears the Phosphothreonine mark. Lysine 12 carries the post-translational modification N6-succinyllysine. Lysine 17 carries the N6-acetyllysine; alternate modification. Lysine 17 is subject to N6-succinyllysine; alternate. Position 25 is a phosphotyrosine (tyrosine 25). Serine 36 is subject to Phosphoserine. At lysine 41 the chain carries N6-succinyllysine. At serine 50 the chain carries Phosphoserine. Histidine 59 is a binding site for O2. Histidine 88 is a heme b binding site. Serine 103 is modified (phosphoserine). Threonine 109 is subject to Phosphothreonine. Phosphoserine is present on residues serine 125 and serine 132. Threonine 135 and threonine 138 each carry phosphothreonine. Residue serine 139 is modified to Phosphoserine.

Belongs to the globin family. Heterotetramer of two alpha chains and two beta chains. In terms of tissue distribution, red blood cells.

Functionally, involved in oxygen transport from the lung to the various peripheral tissues. Its function is as follows. Hemopressin acts as an antagonist peptide of the cannabinoid receptor CNR1. Hemopressin-binding efficiently blocks cannabinoid receptor CNR1 and subsequent signaling. This Dasyurus viverrinus (Eastern quoll) protein is Hemoglobin subunit alpha (HBA).